Consider the following 361-residue polypeptide: Deoxyhypusine hydroxylase (361 aa).

HEAT-like PBS-type repeat units lie at residues Leu-59 to Asn-85, Val-94 to Asp-120, Gln-183 to Asp-211, and Phe-216 to Asp-242. Positions 61, 62, 96, and 97 each coordinate Fe cation. Fe cation-binding residues include His-218, Glu-219, His-251, and Glu-252.

The protein belongs to the deoxyhypusine hydroxylase family. It depends on Fe(2+) as a cofactor.

The protein resides in the cytoplasm. It is found in the nucleus. The enzyme catalyses [eIF5A protein]-deoxyhypusine + AH2 + O2 = [eIF5A protein]-hypusine + A + H2O. It participates in protein modification; eIF5A hypusination. In terms of biological role, catalyzes the hydroxylation of the N(6)-(4-aminobutyl)-L-lysine intermediate to form hypusine, an essential post-translational modification only found in mature eIF-5A factor. This is Deoxyhypusine hydroxylase from Cryptococcus neoformans var. neoformans serotype D (strain JEC21 / ATCC MYA-565) (Filobasidiella neoformans).